We begin with the raw amino-acid sequence, 610 residues long: Isocitrate dehydrogenase kinase/phosphatase (610 aa).

ATP contacts are provided by residues 359-365 and Lys380; that span reads APGFKGT. Asp419 is an active-site residue.

Belongs to the AceK family.

Its subcellular location is the cytoplasm. It catalyses the reaction L-seryl-[isocitrate dehydrogenase] + ATP = O-phospho-L-seryl-[isocitrate dehydrogenase] + ADP + H(+). In terms of biological role, bifunctional enzyme which can phosphorylate or dephosphorylate isocitrate dehydrogenase (IDH) on a specific serine residue. This is a regulatory mechanism which enables bacteria to bypass the Krebs cycle via the glyoxylate shunt in response to the source of carbon. When bacteria are grown on glucose, IDH is fully active and unphosphorylated, but when grown on acetate or ethanol, the activity of IDH declines drastically concomitant with its phosphorylation. This Rhodopseudomonas palustris (strain ATCC BAA-98 / CGA009) protein is Isocitrate dehydrogenase kinase/phosphatase.